Consider the following 255-residue polypeptide: Pyrroloquinoline-quinone synthase (255 aa).

This sequence belongs to the PqqC family.

It catalyses the reaction 6-(2-amino-2-carboxyethyl)-7,8-dioxo-1,2,3,4,7,8-hexahydroquinoline-2,4-dicarboxylate + 3 O2 = pyrroloquinoline quinone + 2 H2O2 + 2 H2O + H(+). Its pathway is cofactor biosynthesis; pyrroloquinoline quinone biosynthesis. Its function is as follows. Ring cyclization and eight-electron oxidation of 3a-(2-amino-2-carboxyethyl)-4,5-dioxo-4,5,6,7,8,9-hexahydroquinoline-7,9-dicarboxylic-acid to PQQ. The polypeptide is Pyrroloquinoline-quinone synthase (Cereibacter sphaeroides (strain ATCC 17029 / ATH 2.4.9) (Rhodobacter sphaeroides)).